The chain runs to 895 residues: Androgen receptor (895 aa).

Residues methionine 1 to lysine 533 are modulating. The interaction with ZNF318 stretch occupies residues methionine 1–alanine 562. 2 disordered regions span residues valine 33–leucine 150 and glutamine 178–glycine 211. Composition is skewed to low complexity over residues alanine 44–glutamine 81 and glutamine 178–alanine 200. Serine 65 carries the phosphoserine; by CDK9 modification. The residue at position 79 (serine 79) is a Phosphoserine. The segment covering proline 201–glycine 211 has biased composition (polar residues). At tyrosine 208 the chain carries Phosphotyrosine; by CSK. Serine 241 is modified (phosphoserine). At tyrosine 252 the chain carries Phosphotyrosine; by CSK and TNK2. Residues tyrosine 292, tyrosine 331, tyrosine 342, and tyrosine 347 each carry the phosphotyrosine; by CSK modification. A Phosphotyrosine; by CSK and TNK2 modification is found at tyrosine 348. Lysine 371 participates in a covalent cross-link: Glycyl lysine isopeptide (Lys-Gly) (interchain with G-Cter in SUMO). Phosphotyrosine; by CSK is present on tyrosine 378. A Glycyl lysine isopeptide (Lys-Gly) (interchain with G-Cter in SUMO) cross-link involves residue lysine 496. Phosphotyrosine; by CSK occurs at positions 510 and 527. Positions tyrosine 527 to threonine 894 are interaction with LPXN. The nuclear receptor DNA-binding region spans threonine 534 to leucine 607. 2 NR C4-type zinc fingers span residues cysteine 535–cysteine 555 and cysteine 571–cysteine 595. Residues tyrosine 547–valine 637 are interaction with HIPK3. The tract at residues glutamine 567 to threonine 894 is interaction with CCAR1. Positions methionine 600 to threonine 894 are interaction with KAT7. At serine 626 the chain carries Phosphoserine; by STK4/MST1. Residues glutamate 644–isoleucine 875 enclose the NR LBD domain. Positions 681 and 728 each coordinate 17beta-hydroxy-5alpha-androstan-3-one. Residues lysine 821 and lysine 823 each participate in a glycyl lysine isopeptide (Lys-Gly) (interchain with G-Cter in ubiquitin) cross-link. Threonine 853 contributes to the 17beta-hydroxy-5alpha-androstan-3-one binding site. Tyrosine 891 is subject to Phosphotyrosine; by CSK.

This sequence belongs to the nuclear hormone receptor family. NR3 subfamily. Binds DNA as a homodimer. Part of a ternary complex containing AR, EFCAB6/DJBP and PARK7. Interacts with HIPK3 and NR0B2 in the presence of androgen. The ligand binding domain interacts with KAT7/HBO1 in the presence of dihydrotestosterone. Interacts with EFCAB6/DJBP, PQBP1, RANBP9, RBAK, SPDEF, SRA1, TGFB1I1 and RREB1. Interacts with ZMIZ1/ZIMP10 and ZMIZ2/ZMIP7 which both enhance its transactivation activity. Interacts with SLC30A9 and RAD54L2/ARIP4. Interacts with MACROD1 (via macro domain). Interacts via the ligand-binding domain with LXXLL and FXXLF motifs from NCOA1, NCOA2, NCOA3 and MAGEA11. Interacts (via nuclear receptor DNA binding domain and nuclear receptor ligand binding domain) with NCOA4. The AR N-terminal poly-Gln region binds Ran resulting in enhancement of AR-mediated transactivation. Ran-binding decreases as the poly-Gln length increases. Interacts with HIP1 (via coiled coil domain). Interacts (via ligand-binding domain) with TRIM68. Interacts with TNK2. Interacts with USP26. Interacts with RNF6. Interacts (regulated by RNF6 probably through polyubiquitination) with RNF14; regulates AR transcriptional activity. Interacts with PRMT2 and TRIM24. Interacts with RACK1. Interacts with RANBP10; this interaction enhances dihydrotestosterone-induced AR transcriptional activity. Interacts with PRPF6 in a hormone-independent way; this interaction enhances dihydrotestosterone-induced AR transcriptional activity. Interacts with STK4/MST1. Interacts with ZIPK/DAPK3. Interacts with LPXN. Interacts with MAK. Part of a complex containing AR, MAK and NCOA3. Interacts with CRY1. Interacts with CCAR1 and GATA2. Interacts with ZNF318. Interacts with BUD31. Interacts with ARID4A. Interacts with ARID4B. Interacts (via NR LBD domain) with ZBTB7A; the interaction is direct and androgen-dependent. Interacts with NCOR1. Interacts with NCOR2. Interacts with CRY2 in a ligand-dependent manner. Phosphorylated in prostate cancer cells in response to several growth factors including EGF. Phosphorylation is induced by c-Src kinase (CSK). Tyr-510 is one of the major phosphorylation sites and an increase in phosphorylation and Src kinase activity is associated with prostate cancer progression. Phosphorylation by TNK2 enhances the DNA-binding and transcriptional activity. Phosphorylation at Ser-65 by CDK9 regulates AR promoter selectivity and cell growth. In terms of processing, sumoylated on Lys-371 (major) and Lys-496. Ubiquitinated. Deubiquitinated by USP26. 'Lys-6' and 'Lys-27'-linked polyubiquitination by RNF6 modulates AR transcriptional activity and specificity. Post-translationally, palmitoylated by ZDHHC7 and ZDHHC21. Palmitoylation is required for plasma membrane targeting and for rapid intracellular signaling via ERK and AKT kinases and cAMP generation.

It is found in the nucleus. It localises to the cytoplasm. In terms of biological role, steroid hormone receptors are ligand-activated transcription factors that regulate eukaryotic gene expression and affect cellular proliferation and differentiation in target tissues. Transcription factor activity is modulated by bound coactivator and corepressor proteins like ZBTB7A that recruits NCOR1 and NCOR2 to the androgen response elements/ARE on target genes, negatively regulating androgen receptor signaling and androgen-induced cell proliferation. Transcription activation is also down-regulated by NR0B2. Activated, but not phosphorylated, by HIPK3 and ZIPK/DAPK3. In Macaca mulatta (Rhesus macaque), this protein is Androgen receptor (AR).